Here is a 701-residue protein sequence, read N- to C-terminus: METKNSEDQGKPQRKSVSSLWKSKHGPAEMRPELPPETAKETQNEEPRCLIPIQRNSLFNRAMRHKHKARSMSERRANDQAGDLPETRKSVNEPLAFNLPQGRLPPWRTPAQRGPGAQEASESSSTPGNGTTPEECPALTDSPTTLTEALQMIHPIPADSWRNLIEQIGLLYQEYRDKSTLQEIETRRQQDAEIQGNSDGSQAGEDNAEEEEEEEEEPASPPERRALPQICLLSNPHSRFNLWQDLPEIQSSGVLDILQPEETKLQEAMFELVTSEASYYKSLNLLVSHFMENERLKKILHPSEAHILFSNVLDVMAVSERFLLELEHRMEENIVISDVCDIVYRYAADHFSVYITYVSNQTYQERTYKQLLQEKTAFRELIAQLELDPKCKGLPLSSFLILPFQRITRLKLLVQNILKRVEEGSEREGTALDAHKELEMVVKACNEGVRKMSRTEQMISIQKKMEFKIKSVPIISHSRWLLKQGELQQMSGPKTSRTLRTKKLFREIYLFLFNDLLVICRQIPGDKYQVFDSAPRGLLRVEELEDQGQTLANVFILRLLENADDREATYMLKASSQSEMKRWMTSLAPNRRTKFVSFTSRLLDCPQVQCVHPYVAQQPDELTLELADILNILEKTEDGWIFGERLHDQERGWFPSSMTEEILNPKIRSQNLKECFRVHKMEDPQRSQNKDRRKLGSRNRQ.

2 stretches are compositionally biased toward basic and acidic residues: residues 1–11 (METKNSEDQGK) and 26–48 (GPAE…EEPR). Residues 1 to 141 (METKNSEDQG…TPEECPALTD (141 aa)) form a disordered region. The interval 1–264 (METKNSEDQG…LDILQPEETK (264 aa)) is regulatory region; modulates activity toward RHOA, RAC1 and CDC42. Polar residues predominate over residues 120 to 132 (ASESSSTPGNGTT). Tyrosine 172 bears the Phosphotyrosine mark. The disordered stretch occupies residues 187-226 (RRQQDAEIQGNSDGSQAGEDNAEEEEEEEEEPASPPERRA). A compositionally biased stretch (acidic residues) spans 206–218 (DNAEEEEEEEEEP). The DH domain maps to 264 to 448 (KLQEAMFELV…EMVVKACNEG (185 aa)). The PH domain maps to 480-592 (WLLKQGELQQ…WMTSLAPNRR (113 aa)). One can recognise an SH3 domain in the interval 603–664 (LDCPQVQCVH…PSSMTEEILN (62 aa)). Residues 679–690 (HKMEDPQRSQNK) are compositionally biased toward basic and acidic residues. The tract at residues 679–701 (HKMEDPQRSQNKDRRKLGSRNRQ) is disordered. Positions 691–701 (DRRKLGSRNRQ) are enriched in basic residues.

In terms of assembly, interacts with CDK5R1 and EPHA4; activated by EPHA4 through the CDK5 kinase. Phosphorylation by CDK5 upon EPHA4 activation by EFNA1 may regulate dendritic spine morphogenesis. Src-dependent phosphorylation at Tyr-172 upon EPHA4 activation increases the guanine exchange factor activity toward RHOA. As to expression, expressed in telencephalic neurons (at protein level). Expressed in brain, spinal cord and testis.

It localises to the cytoplasm. Its subcellular location is the membrane. It is found in the cell projection. The protein resides in the growth cone. Its function is as follows. Acts as a guanine nucleotide exchange factor (GEF) which differentially activates the GTPases RHOA, RAC1 and CDC42. Plays a role in axon guidance regulating ephrin-induced growth cone collapse and dendritic spine morphogenesis. Upon activation by ephrin through EPHA4, the GEF activity switches toward RHOA resulting in its activation. Activated RHOA promotes cone retraction at the expense of RAC1- and CDC42-stimulated growth cone extension. The polypeptide is Ephexin-1 (Ngef) (Rattus norvegicus (Rat)).